The sequence spans 433 residues: Pyrimidine-nucleoside phosphorylase (433 aa).

Phosphate is bound at residue 81-83 (KHS). 2 residues coordinate K(+): Gly88 and Thr90. Residues Thr92, 108-110 (KMS), and Thr120 each bind phosphate. Substrate contacts are provided by Arg168 and Lys187. Leu243, Ala246, and Glu255 together coordinate K(+).

It belongs to the thymidine/pyrimidine-nucleoside phosphorylase family. As to quaternary structure, homodimer. It depends on K(+) as a cofactor.

It catalyses the reaction uridine + phosphate = alpha-D-ribose 1-phosphate + uracil. The catalysed reaction is thymidine + phosphate = 2-deoxy-alpha-D-ribose 1-phosphate + thymine. The enzyme catalyses 2'-deoxyuridine + phosphate = 2-deoxy-alpha-D-ribose 1-phosphate + uracil. In terms of biological role, catalyzes phosphorolysis of the pyrimidine nucleosides uridine, thymidine and 2'-deoxyuridine with the formation of the corresponding pyrimidine base and ribose-1-phosphate. The chain is Pyrimidine-nucleoside phosphorylase (pdp) from Staphylococcus haemolyticus (strain JCSC1435).